The chain runs to 646 residues: MGLPRLVCAFLLAACCCCPRVAGVPGEAEQPAPELVEVEVGSTALLKCGLSQSQGNLSHVDWFSVHKEKRTLIFRVRQGQGQSEPGEYEQRLSLQDRGATLALTQVTPQDERIFLCQGKRPRSQEYRIQLRVYKAPEEPNIQVNPLGIPVNSKEPEEVATCVGRNGYPIPQVIWYKNGRPLKEEKNRVHIQSSQTVESSGLYTLQSILKAQLVKEDKDAQFYCELNYRLPSGNHMKESREVTVPVFYPTEKVWLEVEPVGMLKEGDRVEIRCLADGNPPPHFSISKQNPSTREAEEETTNDNGVLVLEPARKEHSGRYECQGLDLDTMISLLSEPQELLVNYVSDVRVSPAAPERQEGSSLTLTCEAESSQDLEFQWLREETGQVLERGPVLQLHDLKREAGGGYRCVASVPSIPGLNRTQLVNVAIFGPPWMAFKERKVWVKENMVLNLSCEASGHPRPTISWNVNGTASEQDQDPQRVLSTLNVLVTPELLETGVECTASNDLGKNTSILFLELVNLTTLTPDSNTTTGLSTSTASPHTRANSTSTERKLPEPESRGVVIVAVIVCILVLAVLGAVLYFLYKKGKLPCRRSGKQEITLPPSRKSELVVEVKSDKLPEEMGLLQGSSGDKRAPGDQGEKYIDLRH.

A signal peptide spans 1 to 23 (MGLPRLVCAFLLAACCCCPRVAG). 2 consecutive Ig-like V-type domains span residues 24–129 (VPGE…YRIQ) and 139–242 (PNIQ…REVT). The Extracellular segment spans residues 24–559 (VPGEAEQPAP…RKLPEPESRG (536 aa)). 4 disulfides stabilise this stretch: Cys-48–Cys-116, Cys-161–Cys-223, Cys-272–Cys-320, and Cys-365–Cys-407. A glycan (N-linked (GlcNAc...) asparagine) is linked at Asn-56. 3 consecutive Ig-like C2-type domains span residues 244 to 330 (PVFY…TMIS), 335 to 424 (PQEL…QLVN), and 430 to 510 (PPWM…KNTS). Positions 278 to 299 (PPPHFSISKQNPSTREAEEETT) are disordered. 7 N-linked (GlcNAc...) asparagine glycosylation sites follow: Asn-418, Asn-449, Asn-467, Asn-508, Asn-518, Asn-527, and Asn-544. Cys-452 and Cys-499 form a disulfide bridge. The disordered stretch occupies residues 525 to 554 (DSNTTTGLSTSTASPHTRANSTSTERKLPE). Residues 533–547 (STSTASPHTRANSTS) show a composition bias toward polar residues. Residues 560–583 (VVIVAVIVCILVLAVLGAVLYFLY) traverse the membrane as a helical segment. Residues 584–646 (KKGKLPCRRS…QGEKYIDLRH (63 aa)) lie on the Cytoplasmic side of the membrane. 3 positions are modified to phosphoserine: Ser-606, Ser-614, and Ser-628. Positions 620 to 646 (EMGLLQGSSGDKRAPGDQGEKYIDLRH) are disordered. Positions 629-646 (GDKRAPGDQGEKYIDLRH) are enriched in basic and acidic residues.

As to expression, detected in endothelial cells in vascular tissue throughout the body. May appear at the surface of neural crest cells during their embryonic migration. Appears to be limited to vascular smooth muscle in normal adult tissues. Associated with tumor progression and the development of metastasis in human malignant melanoma. Expressed most strongly on metastatic lesions and advanced primary tumors and is only rarely detected in benign melanocytic nevi and thin primary melanomas with a low probability of metastasis.

It localises to the membrane. In terms of biological role, plays a role in cell adhesion, and in cohesion of the endothelial monolayer at intercellular junctions in vascular tissue. Its expression may allow melanoma cells to interact with cellular elements of the vascular system, thereby enhancing hematogeneous tumor spread. Could be an adhesion molecule active in neural crest cells during embryonic development. Acts as a surface receptor that triggers tyrosine phosphorylation of FYN and PTK2/FAK1, and a transient increase in the intracellular calcium concentration. The polypeptide is Cell surface glycoprotein MUC18 (MCAM) (Homo sapiens (Human)).